A 201-amino-acid chain; its full sequence is Large ribosomal subunit protein bL25 (201 aa).

This sequence belongs to the bacterial ribosomal protein bL25 family. CTC subfamily. Part of the 50S ribosomal subunit; part of the 5S rRNA/L5/L18/L25 subcomplex. Contacts the 5S rRNA. Binds to the 5S rRNA independently of L5 and L18.

Its function is as follows. This is one of the proteins that binds to the 5S RNA in the ribosome where it forms part of the central protuberance. This Chlorobaculum parvum (strain DSM 263 / NCIMB 8327) (Chlorobium vibrioforme subsp. thiosulfatophilum) protein is Large ribosomal subunit protein bL25.